The chain runs to 204 residues: Minor allergen Cla h 7 (204 aa).

The Flavodoxin-like domain occupies 5-195 (IAIIFYSTWG…ELTAQGKAFY (191 aa)).

It belongs to the WrbA family.

It is found in the cytoplasm. This chain is Minor allergen Cla h 7 (CLAH7), found in Davidiella tassiana (Mycosphaerella tassiana).